The following is a 59-amino-acid chain: Large ribosomal subunit protein bL32 (59 aa).

Over residues 1–19 (MPVPKRRMSRSNTRSRRAQ) the composition is skewed to basic residues. A disordered region spans residues 1–20 (MPVPKRRMSRSNTRSRRAQW).

Belongs to the bacterial ribosomal protein bL32 family.

The chain is Large ribosomal subunit protein bL32 from Acidothermus cellulolyticus (strain ATCC 43068 / DSM 8971 / 11B).